Consider the following 548-residue polypeptide: MPTSLEQAAALIGGVGTHLLYFKHGERHAYPWRYVALLLAGSLSLWAFKWSREGTTTSILAVTSSTSVLLFLYLGGLAGSVLLYRLFFNPLNRFPGPFAARLSKLYFVYLSSDLRGHRKLHELHQKYGRYVRVGPNDLSVVDPDGMKIVLGANSKCTKSAWYGQDMPYISTNTTRDRAAHDRRRRILAPAFSDKALRGYASRLQKFHDLLTSQIDASAGKPMNVTKWFGYWGMDMMCDIVFNGSFNMLASGETHWALQVVGDGLHLQGFALPPWLYRVFATMPKSSSGSRGLAAFAATQLENRMQQQGKTAHADMMQPLIEHYDRLSTDTKRAILPLLQGDSRMLIVAGSDTTSTTLVHMFYRFCKESGLVDRVREEVEPLVSDPNLISYSDIRQAQLLHACINETLRLHYPGPSGFFRKTPPEGIHIGEQHVPGDTIIQMPPYVMGLDEEVYERCSEFVPERWYSKPEMIKHKDAFLPFLAGSESCIGKNLAYIQLAVVASQIILQFDVAFAPGEDGNKLVRESKDLGMLHPEDLHVVFTRRGKTHS.

2 helical membrane passes run 28-48 (HAYP…LWAF) and 68-88 (VLLF…RLFF). Asparagine 172, asparagine 223, asparagine 242, and asparagine 404 each carry an N-linked (GlcNAc...) asparagine glycan. Residue cysteine 487 participates in heme binding.

It belongs to the cytochrome P450 family. The cofactor is heme.

The protein resides in the membrane. The protein operates within secondary metabolite biosynthesis. In terms of biological role, cytochrome P450 monooxygenase; part of the gene cluster that mediates the biosynthesis of the lipopeptide antibiotics leucinostatins that show extensive biological activities, including antimalarial, antiviral, antibacterial, antifungal, and antitumor activities, as well as phytotoxic. Leucinostatin A contains nine amino acid residues, including the unusual amino acid 4-methyl-L-proline (MePro), 2-amino-6-hydroxy-4-methyl-8-oxodecanoic acid (AHyMeOA), 3-hydroxyleucine (HyLeu), alpha-aminoisobutyric acid (AIB), beta-Ala, a 4-methylhex-2-enoic acid at the N-terminus as well as a N1,N1-dimethylpropane-1,2-diamine (DPD) at the C-terminus. The biosynthesis of leucinostatins is probably initiated with the assembly of 4-methylhex-2-enoic acid by a reducing PKS. Two reducing polyketide synthases, lcsB and lcsC, have been identified in the cluster and it is not clear which is the one that assembles 4-methylhex-2-enoic acid since both contain KS, AT, DH, cMT, ER, KR and ACP domains. The polyketide residue might be transferred to the NRPS lcsA, mediated by two additional enzymes, the acyl-CoA ligase lcsD and the thioesterase lcsE. The linear polyketide carboxylic acid, which is released from PKS, is converted to a CoA thioester by lcsD, and then lcsE hydrolyzes the thiol bond and shuttles the polyketide intermediate to lcsA. The C domain of the first module catalyzed the condensation of 4-methylhex-2-enoic acid and MePro carried by domain A1, followed by successive condensations of nine amino acids to trigger the elongation of the linear peptide. A5 and A6 domains of lcsA are proposed to incorporate leucine, A2 AHyMeOA, and A3 incorporates HyLeu. A4, A7 and A8 incorporate AIB. The AHyMeOA in leucinostatin A activated by the A2 might be produced by the second PKS (lcsB or lcsC) present within the cluster. The MePro is probably produced via leucine cyclization and may originate from a separate pathway, independent of the cluster. Another nonproteinogenic amino acid, beta-Ala, could be produced by an aspartic acid decarboxylase also localized outside of the cluster. Two candidates are VFPBJ_01400 and VFPBJ_10476. The final peptide scaffold may be released by the NAD(P)H-dependent thioester reductase (TE) at the C-terminal region of lcsA. Transamination of the lcsA product by the transaminase lcsP may produce DPD at the C-terminus. Further hydroxylation steps performed alternatively by the cytochrome P450 monooxygenases lcsI, lcsK and lcsN then yield the non-methylated leucinostatins precursor. It is also possible that leucines can be hydroxylated prior to their incorporation into the peptide. Varying extents of methylation then lead to the formation of leucinostatins A and B. This Purpureocillium lilacinum (Paecilomyces lilacinus) protein is Cytochrome P450 monooxygenase lcsK.